Here is a 221-residue protein sequence, read N- to C-terminus: Deoxyribose-phosphate aldolase (221 aa).

The active-site Proton donor/acceptor is aspartate 91. Residue lysine 153 is the Schiff-base intermediate with acetaldehyde of the active site. Catalysis depends on lysine 182, which acts as the Proton donor/acceptor.

This sequence belongs to the DeoC/FbaB aldolase family. DeoC type 1 subfamily.

The protein resides in the cytoplasm. It carries out the reaction 2-deoxy-D-ribose 5-phosphate = D-glyceraldehyde 3-phosphate + acetaldehyde. It functions in the pathway carbohydrate degradation; 2-deoxy-D-ribose 1-phosphate degradation; D-glyceraldehyde 3-phosphate and acetaldehyde from 2-deoxy-alpha-D-ribose 1-phosphate: step 2/2. Functionally, catalyzes a reversible aldol reaction between acetaldehyde and D-glyceraldehyde 3-phosphate to generate 2-deoxy-D-ribose 5-phosphate. The polypeptide is Deoxyribose-phosphate aldolase (Clostridium botulinum (strain Alaska E43 / Type E3)).